A 451-amino-acid polypeptide reads, in one-letter code: Tubulin alpha-1 chain (451 aa).

Glutamine 11 contributes to the GTP binding site. An N6-acetyllysine modification is found at lysine 40. The GTP site is built by glutamate 71, glycine 144, threonine 145, threonine 179, asparagine 206, and asparagine 228. Glutamate 71 contacts Mg(2+). Glutamate 254 is an active-site residue.

It belongs to the tubulin family. In terms of assembly, dimer of alpha and beta chains. A typical microtubule is a hollow water-filled tube with an outer diameter of 25 nm and an inner diameter of 15 nM. Alpha-beta heterodimers associate head-to-tail to form protofilaments running lengthwise along the microtubule wall with the beta-tubulin subunit facing the microtubule plus end conferring a structural polarity. Microtubules usually have 13 protofilaments but different protofilament numbers can be found in some organisms and specialized cells. The cofactor is Mg(2+). Post-translationally, undergoes a tyrosination/detyrosination cycle, the cyclic removal and re-addition of a C-terminal tyrosine residue by the enzymes tubulin tyrosine carboxypeptidase (TTCP) and tubulin tyrosine ligase (TTL), respectively. In terms of processing, acetylation of alpha chains at Lys-40 stabilizes microtubules and affects affinity and processivity of microtubule motors. This modification has a role in multiple cellular functions, ranging from cell motility, cell cycle progression or cell differentiation to intracellular trafficking and signaling.

It localises to the cytoplasm. The protein localises to the cytoskeleton. The enzyme catalyses GTP + H2O = GDP + phosphate + H(+). In terms of biological role, tubulin is the major constituent of microtubules, a cylinder consisting of laterally associated linear protofilaments composed of alpha- and beta-tubulin heterodimers. Microtubules grow by the addition of GTP-tubulin dimers to the microtubule end, where a stabilizing cap forms. Below the cap, tubulin dimers are in GDP-bound state, owing to GTPase activity of alpha-tubulin. The sequence is that of Tubulin alpha-1 chain (TUBA1) from Chlamydomonas reinhardtii (Chlamydomonas smithii).